A 354-amino-acid chain; its full sequence is UDP-galactose transporter homolog 1 (354 aa).

5 helical membrane passes run 6 to 26, 54 to 74, 95 to 112, 123 to 143, and 148 to 168; these read GGSI…FLTW, LVIN…YSVV, FFKS…SSPL, LAYL…HFVL, and FPLY…IFTL. A glycan (N-linked (GlcNAc...) asparagine) is linked at asparagine 202. Transmembrane regions (helical) follow at residues 227–247, 268–288, 295–317, and 321–340; these read YLMC…ALIF, MNIL…FIIL, ILIT…LFGH, and GLQW…EALV.

The protein belongs to the nucleotide-sugar transporter family. SLC35B subfamily.

The protein resides in the endoplasmic reticulum membrane. Its function is as follows. May be involved in specific transport of UDP-Gal from the cytosol to the Golgi lumen. Involved in the maintenance of optimal conditions for the folding of secretory pathway proteins in the endoplasmic reticulum. This Debaryomyces hansenii (strain ATCC 36239 / CBS 767 / BCRC 21394 / JCM 1990 / NBRC 0083 / IGC 2968) (Yeast) protein is UDP-galactose transporter homolog 1 (HUT1).